The chain runs to 369 residues: Geranylgeranyl pyrophosphate synthase, chloroplastic (369 aa).

Isopentenyl diphosphate-binding residues include K118, R121, and H150. Positions 157 and 163 each coordinate Mg(2+). R168 provides a ligand contact to dimethylallyl diphosphate. An isopentenyl diphosphate-binding site is contributed by R169. Positions 254, 255, 292, 309, and 319 each coordinate dimethylallyl diphosphate.

Belongs to the FPP/GGPP synthase family. In terms of assembly, monomer. Requires Mg(2+) as cofactor.

It localises to the plastid. The protein localises to the chloroplast. The catalysed reaction is isopentenyl diphosphate + dimethylallyl diphosphate = (2E)-geranyl diphosphate + diphosphate. The enzyme catalyses isopentenyl diphosphate + (2E)-geranyl diphosphate = (2E,6E)-farnesyl diphosphate + diphosphate. It catalyses the reaction isopentenyl diphosphate + (2E,6E)-farnesyl diphosphate = (2E,6E,10E)-geranylgeranyl diphosphate + diphosphate. Its pathway is isoprenoid biosynthesis; farnesyl diphosphate biosynthesis; farnesyl diphosphate from geranyl diphosphate and isopentenyl diphosphate: step 1/1. It participates in isoprenoid biosynthesis; geranyl diphosphate biosynthesis; geranyl diphosphate from dimethylallyl diphosphate and isopentenyl diphosphate: step 1/1. It functions in the pathway isoprenoid biosynthesis; geranylgeranyl diphosphate biosynthesis; geranylgeranyl diphosphate from farnesyl diphosphate and isopentenyl diphosphate: step 1/1. Catalyzes the trans-addition of the three molecules of IPP onto DMAPP to form geranylgeranyl pyrophosphate. This chain is Geranylgeranyl pyrophosphate synthase, chloroplastic, found in Capsicum annuum (Capsicum pepper).